The sequence spans 344 residues: RNA 3'-terminal phosphate cyclase (344 aa).

Residues Gln102 and 284-288 each bind ATP; that span reads FLGDQ. The active-site Tele-AMP-histidine intermediate is His308.

It belongs to the RNA 3'-terminal cyclase family. Type 1 subfamily.

Its subcellular location is the cytoplasm. It carries out the reaction a 3'-end 3'-phospho-ribonucleotide-RNA + ATP = a 3'-end 2',3'-cyclophospho-ribonucleotide-RNA + AMP + diphosphate. Functionally, catalyzes the conversion of 3'-phosphate to a 2',3'-cyclic phosphodiester at the end of RNA. The mechanism of action of the enzyme occurs in 3 steps: (A) adenylation of the enzyme by ATP; (B) transfer of adenylate to an RNA-N3'P to produce RNA-N3'PP5'A; (C) and attack of the adjacent 2'-hydroxyl on the 3'-phosphorus in the diester linkage to produce the cyclic end product. The biological role of this enzyme is unknown but it is likely to function in some aspects of cellular RNA processing. In Thermococcus gammatolerans (strain DSM 15229 / JCM 11827 / EJ3), this protein is RNA 3'-terminal phosphate cyclase.